Here is a 1132-residue protein sequence, read N- to C-terminus: Tyrosine-protein kinase JAK2 (1132 aa).

Positions 1–239 (MGMACLTMTE…RYRFRRFIQQ (239 aa)) are interaction with cytokine/interferon/growth hormone receptors. In terms of domain architecture, FERM spans 37 to 380 (PVLLVYLYHS…GYYRLTADAH (344 aa)). At tyrosine 119 the chain carries Phosphotyrosine; by autocatalysis. 2 positions are modified to phosphotyrosine: tyrosine 372 and tyrosine 373. The SH2; atypical domain maps to 401–482 (HGPISMDFAI…SLKDLLNCYQ (82 aa)). Serine 523 is subject to Phosphoserine. Residues 545–809 (LIFNESLGQG…AIIRDLNSLF (265 aa)) form the Protein kinase 1 domain. Phosphotyrosine occurs at positions 570 and 813. The region spanning 849-1126 (LKFLQQLGKG…RDLALRVDQI (278 aa)) is the Protein kinase 2 domain. 855–863 (LGKGNFGSV) is a binding site for ATP. The residue at position 868 (tyrosine 868) is a Phosphotyrosine; by autocatalysis. An ATP-binding site is contributed by lysine 882. Phosphotyrosine; by autocatalysis occurs at positions 966 and 972. Catalysis depends on aspartate 976, which acts as the Proton acceptor. Phosphotyrosine; by autocatalysis occurs at positions 1007 and 1008.

Belongs to the protein kinase superfamily. Tyr protein kinase family. JAK subfamily. As to quaternary structure, interacts with IL23R, SKB1 and STAM2. Interacts with EPOR. Interacts with LYN. Interacts with SIRPA. Interacts with SH2B1. Interacts with TEC. Interacts with IFNGR2 (via intracellular domain). Interacts with LEPR (Isoform B). Interacts with HSP90AB1; promotes functional activation in a heat shock-dependent manner. Interacts with STRA6. Interacts with RHEX; this interaction occurs in a erythropoietin (EPO)-dependent manner. Interacts with ASB2; the interaction targets JAK2 for Notch-induced proteasomal degradation. The cofactor is Mg(2+). Post-translationally, autophosphorylated, leading to regulate its activity. Leptin promotes phosphorylation on tyrosine residues, including phosphorylation on Tyr-813. Autophosphorylation on Tyr-119 in response to EPO down-regulates its kinase activity. Autophosphorylation on Tyr-868, Tyr-966 and Tyr-972 in response to growth hormone (GH) are required for maximal kinase activity. Also phosphorylated by TEC. Phosphorylated on tyrosine residues in response to interferon gamma signaling. Phosphorylated on tyrosine residues in response to a signaling cascade that is activated by increased cellular retinol. Undergoes Notch-induced ubiquitination and subsequent proteasomal degradation which is mediated by ASB1 or ASB2, the substrate-recognition components of probable ECS E3 ubiquitin-protein ligase complexes.

Its subcellular location is the endomembrane system. The protein resides in the cytoplasm. The protein localises to the nucleus. The catalysed reaction is L-tyrosyl-[protein] + ATP = O-phospho-L-tyrosyl-[protein] + ADP + H(+). With respect to regulation, regulated by autophosphorylation, can both activate or decrease activity. Heme regulates its activity by enhancing the phosphorylation on Tyr-1007 and Tyr-1008. Its function is as follows. Non-receptor tyrosine kinase involved in various processes such as cell growth, development, differentiation or histone modifications. Mediates essential signaling events in both innate and adaptive immunity. In the cytoplasm, plays a pivotal role in signal transduction via its association with type I receptors such as growth hormone (GHR), prolactin (PRLR), leptin (LEPR), erythropoietin (EPOR), thrombopoietin (THPO); or type II receptors including IFN-alpha, IFN-beta, IFN-gamma and multiple interleukins. Following ligand-binding to cell surface receptors, phosphorylates specific tyrosine residues on the cytoplasmic tails of the receptor, creating docking sites for STATs proteins. Subsequently, phosphorylates the STATs proteins once they are recruited to the receptor. Phosphorylated STATs then form homodimer or heterodimers and translocate to the nucleus to activate gene transcription. For example, cell stimulation with erythropoietin (EPO) during erythropoiesis leads to JAK2 autophosphorylation, activation, and its association with erythropoietin receptor (EPOR) that becomes phosphorylated in its cytoplasmic domain. Then, STAT5 (STAT5A or STAT5B) is recruited, phosphorylated and activated by JAK2. Once activated, dimerized STAT5 translocates into the nucleus and promotes the transcription of several essential genes involved in the modulation of erythropoiesis. Part of a signaling cascade that is activated by increased cellular retinol and that leads to the activation of STAT5 (STAT5A or STAT5B). In addition, JAK2 mediates angiotensin-2-induced ARHGEF1 phosphorylation. Plays a role in cell cycle by phosphorylating CDKN1B. Cooperates with TEC through reciprocal phosphorylation to mediate cytokine-driven activation of FOS transcription. In the nucleus, plays a key role in chromatin by specifically mediating phosphorylation of 'Tyr-41' of histone H3 (H3Y41ph), a specific tag that promotes exclusion of CBX5 (HP1 alpha) from chromatin. Up-regulates the potassium voltage-gated channel activity of KCNA3. The polypeptide is Tyrosine-protein kinase JAK2 (Pongo abelii (Sumatran orangutan)).